A 178-amino-acid polypeptide reads, in one-letter code: Large ribosomal subunit protein uL16 (178 aa).

It belongs to the universal ribosomal protein uL16 family.

This is Large ribosomal subunit protein uL16 from Saccharolobus solfataricus (strain ATCC 35092 / DSM 1617 / JCM 11322 / P2) (Sulfolobus solfataricus).